Reading from the N-terminus, the 260-residue chain is Hydroxyacylglutathione hydrolase (260 aa).

His-61, His-63, Asp-65, His-66, His-119, Asp-138, and His-176 together coordinate Zn(2+).

It belongs to the metallo-beta-lactamase superfamily. Glyoxalase II family. As to quaternary structure, monomer. The cofactor is Zn(2+).

The catalysed reaction is an S-(2-hydroxyacyl)glutathione + H2O = a 2-hydroxy carboxylate + glutathione + H(+). It functions in the pathway secondary metabolite metabolism; methylglyoxal degradation; (R)-lactate from methylglyoxal: step 2/2. Functionally, thiolesterase that catalyzes the hydrolysis of S-D-lactoyl-glutathione to form glutathione and D-lactic acid. The sequence is that of Hydroxyacylglutathione hydrolase from Brucella suis (strain ATCC 23445 / NCTC 10510).